A 403-amino-acid polypeptide reads, in one-letter code: DNA primase DnaG (403 aa).

Residues 172 to 248 (DSVIIVEGRA…HIDYIARAPP (77 aa)) form the Toprim domain. The Mg(2+) site is built by Glu178, Asp222, and Asp224. A disordered region spans residues 279-300 (AAGEKTEAPAQPTQQQPPPAEA).

It belongs to the archaeal DnaG primase family. As to quaternary structure, forms a ternary complex with MCM helicase and DNA. Component of the archaeal exosome complex. Mg(2+) is required as a cofactor.

The enzyme catalyses ssDNA + n NTP = ssDNA/pppN(pN)n-1 hybrid + (n-1) diphosphate.. Its function is as follows. RNA polymerase that catalyzes the synthesis of short RNA molecules used as primers for DNA polymerase during DNA replication. Also part of the exosome, which is a complex involved in RNA degradation. Acts as a poly(A)-binding protein that enhances the interaction between heteromeric, adenine-rich transcripts and the exosome. The polypeptide is DNA primase DnaG (Pyrobaculum neutrophilum (strain DSM 2338 / JCM 9278 / NBRC 100436 / V24Sta) (Thermoproteus neutrophilus)).